The sequence spans 688 residues: Elongation factor G (688 aa).

In terms of domain architecture, tr-type G spans 8-282; that stretch reads KNFRNFGIMA…AVVDFLPSPV (275 aa). GTP contacts are provided by residues 17–24, 81–85, and 135–138; these read AHIDAGKT, DTPGH, and NKMD.

It belongs to the TRAFAC class translation factor GTPase superfamily. Classic translation factor GTPase family. EF-G/EF-2 subfamily.

It is found in the cytoplasm. Its function is as follows. Catalyzes the GTP-dependent ribosomal translocation step during translation elongation. During this step, the ribosome changes from the pre-translocational (PRE) to the post-translocational (POST) state as the newly formed A-site-bound peptidyl-tRNA and P-site-bound deacylated tRNA move to the P and E sites, respectively. Catalyzes the coordinated movement of the two tRNA molecules, the mRNA and conformational changes in the ribosome. The chain is Elongation factor G (fusA) from Mycoplasma genitalium (strain ATCC 33530 / DSM 19775 / NCTC 10195 / G37) (Mycoplasmoides genitalium).